A 563-amino-acid chain; its full sequence is CDKN2A-interacting protein (563 aa).

A2 is subject to N-acetylalanine. The XRN2-binding (XTBD) domain occupies 19–126 (VETLRCEGET…KVKKRGISSS (108 aa)). Disordered stretches follow at residues 122-289 (GISS…LLGS) and 304-351 (SSSE…PSLL). S124 bears the Phosphoserine mark. Positions 147-160 (VERDHGKKSAKTDR) are enriched in basic and acidic residues. 2 stretches are compositionally biased toward low complexity: residues 168-216 (SSPS…SSQV) and 234-248 (SASF…SMNS). K177 participates in a covalent cross-link: Glycyl lysine isopeptide (Lys-Gly) (interchain with G-Cter in SUMO1). The residue at position 234 (S234) is a Phosphoserine. The span at 249–262 (HMTQSTDNRQQSGS) shows a compositional bias: polar residues. Positions 270-280 (GSSGSASQSSS) are enriched in low complexity. T340 bears the Phosphothreonine mark. S371 is modified (phosphoserine). One can recognise a DRBM domain in the interval 445–520 (NHGELLNAAI…SREALKLFLK (76 aa)).

This sequence belongs to the CARF family. As to quaternary structure, interacts with CDKN2A/p14ARF, p53/TP53 and MDM2. Interacts with CHEK2 and MAPK3. Interacts with XRN2. Post-translationally, may be ubiquitinated.

The protein resides in the nucleus. It is found in the nucleoplasm. Functionally, regulates DNA damage response and cell proliferation in a dose-dependent manner through a number of signaling pathways involved in cell proliferation, apoptosis and senescence. In Mus musculus (Mouse), this protein is CDKN2A-interacting protein (Cdkn2aip).